We begin with the raw amino-acid sequence, 123 residues long: Undecaprenol kinase (123 aa).

Residues 1–33 (MDSKDHRNELNRFFKSFVHAGRGIWETARTERN) lie on the Cytoplasmic side of the membrane. A helical membrane pass occupies residues 34–51 (FQFHAAAACAVLICGFLV). Over 52-57 (ELSIIE) the chain is Extracellular. Residues 58 to 74 (WMIIFLLIGGMFSLELL) form a helical membrane-spanning segment. Topologically, residues 75 to 99 (NTAIEHTVDLITDKHHPLAKAAKDA) are cytoplasmic. The chain crosses the membrane as a helical span at residues 100 to 120 (AAGAVCVFAVISCIIGLLIFL). Over 121-123 (PKL) the chain is Extracellular.

Belongs to the bacterial diacylglycerol kinase family.

The protein localises to the cell membrane. It carries out the reaction di-trans,octa-cis-undecaprenol + ATP = di-trans,octa-cis-undecaprenyl phosphate + ADP + H(+). In terms of biological role, catalyzes the phosphorylation of undecaprenol in vitro, which is probably the physiological substrate. Exhibits no detectable activity against other substrates such as monoacylglycerol, ceramide, or diacylglycerol (DAG). Appears indispensable for the maintenance of spore stability and viability in B.subtilis. This Bacillus subtilis (strain 168) protein is Undecaprenol kinase (dgkA).